The sequence spans 344 residues: Mitochondrial mRNA pseudouridine synthase Rpusd3 (344 aa).

A mitochondrion-targeting transit peptide spans 1-36; it reads MGALRVLRYVSMIWRPELGSCARQRDAGFGTEARRP. The tract at residues 25-53 is disordered; that stretch reads RDAGFGTEARRPSQPHRSSKHKDLVEDQP.

Belongs to the pseudouridine synthase RluA family. As to quaternary structure, forms a regulatory protein-RNA complex, consisting of RCC1L, NGRN, RPUSD3, RPUSD4, TRUB2, FASTKD2 and 16S mt-rRNA.

It is found in the mitochondrion matrix. It carries out the reaction a uridine in mRNA = a pseudouridine in mRNA. Its function is as follows. Catalyzes uridine to pseudouridine isomerization (pseudouridylation) of specific mitochondrial mRNAs (mt-mRNAs), a post-transcriptional modification necessary for their translation. Acts at position 390 in COXI mt-mRNA and at position 697-699 in mitochondrial COXIII mt-mRNA. As a component of a functional protein-RNA module, consisting of RCC1L, NGRN, RPUSD3, RPUSD4, TRUB2, FASTKD2 and 16S mitochondrial ribosomal RNA (16S mt-rRNA), controls 16S mt-rRNA abundance and may play a role in mitochondrial ribosome biogenesis. The sequence is that of Mitochondrial mRNA pseudouridine synthase Rpusd3 (Rpusd3) from Mus musculus (Mouse).